Consider the following 255-residue polypeptide: Taurine import ATP-binding protein TauB (255 aa).

The 228-residue stretch at 2–229 (LQISHLYADY…RFVAGESSRS (228 aa)) folds into the ABC transporter domain. 34-41 (GPSGCGKT) contacts ATP.

This sequence belongs to the ABC transporter superfamily. Taurine importer (TC 3.A.1.17.1) family. As to quaternary structure, the complex is composed of two ATP-binding proteins (TauB), two transmembrane proteins (TauC) and a solute-binding protein (TauA).

It localises to the cell inner membrane. The catalysed reaction is taurine(out) + ATP + H2O = taurine(in) + ADP + phosphate + H(+). Part of the ABC transporter complex TauABC involved in taurine import. Responsible for energy coupling to the transport system. This is Taurine import ATP-binding protein TauB from Escherichia coli O157:H7.